A 194-amino-acid polypeptide reads, in one-letter code: Adenylate kinase (194 aa).

Residue 11–16 coordinates ATP; it reads GSGKGT. Positions 31–60 are NMP; it reads STGELLRAEIKAQTELGQAAAGYINEGHLV. AMP contacts are provided by residues Thr-32, Arg-37, 58-60, 86-89, and Gln-93; these read HLV and GFPR. Positions 127 to 137 are LID; the sequence is NRGKVSGRSDD. An ATP-binding site is contributed by Arg-128. Positions 134 and 145 each coordinate AMP. Gly-173 contributes to the ATP binding site.

Belongs to the adenylate kinase family. Monomer.

It localises to the cytoplasm. The enzyme catalyses AMP + ATP = 2 ADP. Its pathway is purine metabolism; AMP biosynthesis via salvage pathway; AMP from ADP: step 1/1. Its function is as follows. Catalyzes the reversible transfer of the terminal phosphate group between ATP and AMP. Plays an important role in cellular energy homeostasis and in adenine nucleotide metabolism. This Porphyromonas gingivalis (strain ATCC BAA-308 / W83) protein is Adenylate kinase.